The following is a 440-amino-acid chain: MDRFSNLPDDVIYHIVSFLSAKEATCLKFVSKNFQNLVTIKRNVVFHHWESFKNFVDGLLAEPASYRIKRFSLKLVSMDFAQYNIVNDCLCNVLKRGVLDLELDINVKEDYILPSDVFTCKTVVRLKLGCGFVIDILPKNALLPALKTLILDSVRFYASDGCAFTRLLSASPVLEELVIDRLNWEHWKGSRFVSSPTLKRLTLRRKEWEPEPETWTDFESVSFDTPSLAYLKYKDVIPYGYPIVNLNSIVEARLTLPREVEYDYWLNRSADPSNLIRGLKNVEILSIKVLHTMDLLFYNFKEAVPVFENLIHLSVTSEADFCWDPLQILLEKSPNLKTLTIEGPLHYNFYEKLDLEAVCECLLGYSFLLSCPIKVLKITEFVGDIGEIVQMKHVLGKLPCLELLEVHVQARRDDKKLQIMADLLMLPRTSSKCKVKVHFS.

The F-box domain maps to 1–52 (MDRFSNLPDDVIYHIVSFLSAKEATCLKFVSKNFQNLVTIKRNVVFHHWESF). LRR repeat units follow at residues 4–31 (FSNL…KFVS), 126–153 (LKLG…ILDS), 156–181 (FYAS…VIDR), 194–205 (SSPTLKRLTLRR), 210–235 (PEPE…KYKD), 264–289 (YWLN…SIKV), and 318–343 (EADF…TIEG).

In Arabidopsis thaliana (Mouse-ear cress), this protein is Putative F-box/LRR-repeat protein At5g15620.